The sequence spans 395 residues: Pyruvate synthase subunit PorA (395 aa).

In terms of assembly, heterotetramer of one alpha, one beta, one delta and one gamma chain.

It catalyses the reaction 2 oxidized [2Fe-2S]-[ferredoxin] + pyruvate + CoA = 2 reduced [2Fe-2S]-[ferredoxin] + acetyl-CoA + CO2 + H(+). This Pyrococcus abyssi (strain GE5 / Orsay) protein is Pyruvate synthase subunit PorA (porA).